The chain runs to 566 residues: MALTCTDMSDAVAGSDAEGLTADAIVVGAGLAGLVAACELADRGLRVLILDQENRANVGGQAFWSFGGLFLVNSPEQRRLGIRDSHELALQDWLGTAAFDRPEDYWPEQWAHAYVDFAAGEKRSWLRARGLKIFPLVGWAERGGYDAQGHGNSVPRFHITWGTGPALVDIFVRQLRDRPTVRFAHRHQVDKLIVEGNAVTGVRGTVLEPSDEPRGAPSSRKSVGKFEFRASAVIVASGGIGGNHELVRKNWPRRMGRIPKQLLSGVPAHVDGRMIGIAQKAGAAVINPDRMWHYTEGITNYDPIWPRHGIRIIPGPSSLWLDAAGKRLPVPLFPGFDTLGTLEYITKSGHDYTWFVLNAKIIEKEFALSGQEQNPDLTGRRLGQLLRSRAHAGPPGPVQAFIDRGVDCVHANSLRELVAAMNELPDVVPLDYETVAAAVTARDREVVNKYSKDGQITAIRAARRYRGDRFGRVVAPHRLTDPKAGPLIAVKLHILTRKTLGGIETDLDARVLKADGTPLAGLYAAGEVAGFGGGGVHGYRALEGTFLGGCIFSGRAAGRGAAEDIR.

23–54 (DAIVVGAGLAGLVAACELADRGLRVLILDQEN) is an FAD binding site.

This sequence belongs to the FAD-dependent oxidoreductase 2 family. FAD serves as cofactor.

It functions in the pathway lipid metabolism; steroid biosynthesis. Functionally, able to catalyze the elimination of the C-1 and C-2 hydrogen atoms of the A-ring from the polycyclic ring structure of 3-ketosteroids. The polypeptide is KsdD-like steroid dehydrogenase Rv0785 (Mycobacterium tuberculosis (strain ATCC 25618 / H37Rv)).